Reading from the N-terminus, the 122-residue chain is SLLEFGRMIKEETGKNPLSSYISYGCYCGWGGQGEPKDDTDRCCFVHDCCYGKLWGCSPKTDIYFYFRKNGAIVCGRGTWCEKQICECDKAAAICFRENLATYKEEYHSYGKSGCTEKSPKC.

Cystine bridges form between Cys-26–Cys-115, Cys-28–Cys-44, Cys-43–Cys-95, Cys-49–Cys-122, Cys-50–Cys-88, Cys-57–Cys-81, and Cys-75–Cys-86. The Ca(2+) site is built by Tyr-27, Gly-29, and Gly-31. The active site involves His-47. Asp-48 is a Ca(2+) binding site. Asp-89 is a catalytic residue.

It depends on Ca(2+) as a cofactor. As to expression, expressed by the venom gland.

The protein resides in the secreted. The enzyme catalyses a 1,2-diacyl-sn-glycero-3-phosphocholine + H2O = a 1-acyl-sn-glycero-3-phosphocholine + a fatty acid + H(+). Its function is as follows. Snake venom phospholipase A2 that induces fast and sustaining local edema a few hours after injection (5-10 ug) in the hind paw, and prolongs the coagulation time of human plasma. Exhibits moderate hydrolytic activities and prefers the zwitterionic micelles (dPPC with Triton X-100) to the anionic micelles (dPPC with deoxycholate). PLA2 catalyzes the calcium-dependent hydrolysis of the 2-acyl groups in 3-sn-phosphoglycerides. This Trimeresurus stejnegeri (Chinese green tree viper) protein is Basic phospholipase A2 Ts-G6D49.